A 227-amino-acid chain; its full sequence is E3 ubiquitin-protein ligase ZNRF1 (227 aa).

The segment at 1 to 42 (MGGKQSTAARSRGPFPGVSTDDSAVPPPGGAPHFGHYRTGGG) is disordered. Glycine 2 carries the N-myristoyl glycine lipid modification. The tract at residues 2 to 10 (GGKQSTAAR) is required for endosomal and lysosomal localization and myristoylation. 3 positions are modified to phosphoserine: serine 50, serine 52, and serine 53. A disordered region spans residues 68 to 105 (PFGLYTPASRGTGDSERAPGGGGSASDSTYAHGNGYQE). At tyrosine 103 the chain carries Phosphotyrosine; by SRC. Serine 123 is subject to Phosphoserine. Residues 184 to 225 (CVICLEELLQGDTIARLPCLCIYHKSCIDSWFEVNRSCPEHP) form an RING-type; atypical zinc finger.

As to quaternary structure, interacts with AKT1, GLUL and TUBB2A. Interacts with ZNRF2. Interacts (via its RING domain) with UBE2N. Interacts (when phosphorylated) with YWHAE. Post-translationally, N-myristoylation targets ZNRF1 to intracellular membranes. Phosphorylated by SRC at Tyr-103; leading to 'Lys-63'-linked ubiquitination of TLR3, lysosomal trafficking and degradation. Expressed primarily in the nervous system, with expression higher in developing brain relative to adult. Expressed at low levels in testis and thymus.

The protein resides in the endosome. Its subcellular location is the lysosome. It localises to the membrane. It is found in the cytoplasmic vesicle. The protein localises to the secretory vesicle. The protein resides in the synaptic vesicle membrane. It catalyses the reaction S-ubiquitinyl-[E2 ubiquitin-conjugating enzyme]-L-cysteine + [acceptor protein]-L-lysine = [E2 ubiquitin-conjugating enzyme]-L-cysteine + N(6)-ubiquitinyl-[acceptor protein]-L-lysine.. Its pathway is protein modification; protein ubiquitination. In terms of biological role, E3 ubiquitin-protein ligase that plays a role in different processes including cell differentiation, receptor recycling or regulation of inflammation. Mediates the ubiquitination of AKT1 and GLUL, thereby playing a role in neuron cells differentiation. Plays a role in the establishment and maintenance of neuronal transmission and plasticity. Regulates Schwann cells differentiation by mediating ubiquitination of GLUL. Promotes neurodegeneration by mediating 'Lys-48'-linked polyubiquitination and subsequent degradation of AKT1 in axons: degradation of AKT1 prevents AKT1-mediated phosphorylation of GSK3B, leading to GSK3B activation and phosphorylation of DPYSL2/CRMP2 followed by destabilization of microtubule assembly in axons. Ubiquitinates the Na(+)/K(+) ATPase alpha-1 subunit/ATP1A1 and thereby influences its endocytosis and/or degradation. Controls ligand-induced EGFR signaling via mediating receptor ubiquitination and recruitment of the ESCRT machinery. Acts as a negative feedback mechanism controlling TLR3 trafficking by mediating TLR3 'Lys-63'-linked polyubiquitination to reduce type I IFN production. Modulates inflammation by promoting caveolin-1/CAV1 ubiquitination and degradation to regulate TLR4-activated immune response. In Homo sapiens (Human), this protein is E3 ubiquitin-protein ligase ZNRF1 (ZNRF1).